The following is a 397-amino-acid chain: GDP-mannose transporter 1 (397 aa).

The interval 1–57 is disordered; sequence MSKPFVPTPNISRPATPSSLDYGKDEASSTLLRDMGERGDRERKDREERDKKEAMPS. The Cytoplasmic segment spans residues 1-61; the sequence is MSKPFVPTPN…KEAMPSGQDQ (61 aa). Residues 9–19 show a composition bias toward polar residues; that stretch reads PNISRPATPSS. Over residues 34–54 the composition is skewed to basic and acidic residues; that stretch reads DMGERGDRERKDREERDKKEA. A helical membrane pass occupies residues 62-82; sequence VLPILSYCAASIMMTVVNKYV. The Lumenal portion of the chain corresponds to 83–87; it reads VSGAN. Asparagine 87 carries N-linked (GlcNAc...) asparagine glycosylation. A helical transmembrane segment spans residues 88–108; that stretch reads FTMTFLLLAIQSSVCVLAVTT. Residues 109-124 lie on the Cytoplasmic side of the membrane; that stretch reads VKKLGFISFRDFDKND. Residues 125 to 142 traverse the membrane as a helical segment; sequence AKAWWPISTLLVAVIYTG. The Lumenal segment spans residues 143-145; sequence SKA. Residues 146–168 traverse the membrane as a helical segment; it reads LQFLSIPVYTIFKNLTIILIAYG. At 169 to 174 the chain is on the cytoplasmic side; sequence EVFMFN. The chain crosses the membrane as a helical span at residues 175–197; sequence GAVSGLTLCSFALMVGSSIIAAW. Residues 198–228 lie on the Lumenal side of the membrane; that stretch reads SDITSVWNKEPELDPITGLEITVGPVSTIGG. A helical transmembrane segment spans residues 229 to 249; that stretch reads LNAGYIWMALNCFVSAAYVLF. Residues 250-272 lie on the Cytoplasmic side of the membrane; sequence MRKRIKVTGFKDWDSMYYNNLLS. A helical membrane pass occupies residues 273 to 293; sequence IPILVVFSLVIEDWGSESLAL. The Lumenal portion of the chain corresponds to 294-300; it reads NFPASNR. Residues 301–321 traverse the membrane as a helical segment; sequence VLLLSAMAFSGAAAVFISYST. The Cytoplasmic portion of the chain corresponds to 322–332; it reads AWCVRITGSTT. A helical transmembrane segment spans residues 333–353; that stretch reads YSMVGALNKLPVAASGILFFG. Residues 354–355 lie on the Lumenal side of the membrane; sequence DP. Residues 356–376 form a helical membrane-spanning segment; that stretch reads ANFGNISAIAVGGVAGVVYAV. Residues 377–397 are Cytoplasmic-facing; sequence AKTNQAKVEKARQARAAGGRP.

The protein belongs to the TPT transporter family. SLC35D subfamily. As to quaternary structure, homooligomer.

The protein resides in the golgi apparatus membrane. It is found in the cytoplasmic vesicle membrane. The protein localises to the endoplasmic reticulum membrane. Its function is as follows. Involved in the import of GDP-mannose from the cytoplasm into the Golgi lumen. Involved in capsule synthesis. This Cryptococcus neoformans var. neoformans serotype D (strain B-3501A) (Filobasidiella neoformans) protein is GDP-mannose transporter 1 (GMT1).